The chain runs to 203 residues: Ras-related protein RABD2a (203 aa).

Residues 15 to 23, 33 to 40, 63 to 67, 121 to 124, and 151 to 153 contribute to the GTP site; these read GDSGVGKSC, YVESYIST, DTAGQ, NKSD, and SAK. An Effector region motif is present at residues 37 to 45; that stretch reads YISTIGVDF. A disordered region spans residues 176–203; that stretch reads QPAGNNARPPTVQIRGQPVAQKNGCCST. S-geranylgeranyl cysteine attachment occurs at residues C200 and C201.

It belongs to the small GTPase superfamily. Rab family. In terms of assembly, does not interact with GC5.

It is found in the golgi apparatus. It localises to the trans-Golgi network membrane. The protein localises to the golgi apparatus membrane. Protein transport. Regulator of membrane traffic from the Golgi apparatus towards the endoplasmic reticulum (ER). This chain is Ras-related protein RABD2a (RABD2A), found in Arabidopsis thaliana (Mouse-ear cress).